Reading from the N-terminus, the 166-residue chain is Urease accessory protein UreE (166 aa).

The tract at residues 135-156 is disordered; that stretch reads EQGAYGGGHHHSHHGDEEFNYG.

It belongs to the UreE family.

It localises to the cytoplasm. Its function is as follows. Involved in urease metallocenter assembly. Binds nickel. Probably functions as a nickel donor during metallocenter assembly. The chain is Urease accessory protein UreE from Ectopseudomonas mendocina (strain ymp) (Pseudomonas mendocina).